We begin with the raw amino-acid sequence, 374 residues long: Lipid-A-disaccharide synthase (374 aa).

Belongs to the LpxB family.

The catalysed reaction is a lipid X + a UDP-2-N,3-O-bis[(3R)-3-hydroxyacyl]-alpha-D-glucosamine = a lipid A disaccharide + UDP + H(+). It participates in bacterial outer membrane biogenesis; LPS lipid A biosynthesis. Condensation of UDP-2,3-diacylglucosamine and 2,3-diacylglucosamine-1-phosphate to form lipid A disaccharide, a precursor of lipid A, a phosphorylated glycolipid that anchors the lipopolysaccharide to the outer membrane of the cell. This is Lipid-A-disaccharide synthase from Pseudomonas fluorescens (strain ATCC BAA-477 / NRRL B-23932 / Pf-5).